Consider the following 359-residue polypeptide: Tropomodulin-1 (359 aa).

The tract at residues 36–61 is disordered; the sequence is ELDPDNALLPAGLRQKDQTTKAPTGP. The interval 39-138 is tropomyosin-binding; sequence PDNALLPAGL…CDIAAILGMH (100 aa).

Belongs to the tropomodulin family. As to quaternary structure, binds to the N-terminus of tropomyosin and to actin. Interacts with FLII.

It localises to the cytoplasm. The protein localises to the cytoskeleton. In terms of biological role, blocks the elongation and depolymerization of the actin filaments at the pointed end. The Tmod/TM complex contributes to the formation of the short actin protofilament, which in turn defines the geometry of the membrane skeleton. The protein is Tropomodulin-1 (Tmod1) of Rattus norvegicus (Rat).